We begin with the raw amino-acid sequence, 215 residues long: Cytokinin riboside 5'-monophosphate phosphoribohydrolase LOG4 (215 aa).

Substrate-binding positions include E84, 102–103, 119–125, and T131; these read RK and GYGTLEE.

The protein belongs to the LOG family. Expressed in roots and shoots. Detected in root procambium, lateral root primordia, vascular tissues of cotyledons, leaves and stems, shoot apical meristem, axillary buds, young inflorescences, fruit abscission zones and basal part of ovules.

The protein resides in the cytoplasm. Its subcellular location is the nucleus. The catalysed reaction is N(6)-(dimethylallyl)adenosine 5'-phosphate + H2O = N(6)-dimethylallyladenine + D-ribose 5-phosphate. The enzyme catalyses 9-ribosyl-trans-zeatin 5'-phosphate + H2O = trans-zeatin + D-ribose 5-phosphate. In terms of biological role, cytokinin-activating enzyme working in the direct activation pathway. Phosphoribohydrolase that converts inactive cytokinin nucleotides to the biologically active free-base forms. The sequence is that of Cytokinin riboside 5'-monophosphate phosphoribohydrolase LOG4 (LOG4) from Arabidopsis thaliana (Mouse-ear cress).